The sequence spans 744 residues: Tripartite motif-containing protein 2 (744 aa).

The residue at position 10 (Ser10) is a Phosphoserine. Residues 23–64 (CSICLERYKNPKVLPCLHTFCERCLQNYIPAHSLTLSCPVCR) form an RING-type zinc finger. Residues 113–154 (GKPLSCPNHDGNVMEFYCQSCETAMCRECTEGEHAEHPTVPL) form a B box-type zinc finger. Zn(2+)-binding residues include Cys118, His121, Cys141, and His146. Residues 320-421 (TTNAVASETV…IRGSPFKLKV (102 aa)) form a Filamin repeat. At Thr371 the chain carries Phosphothreonine. 3 positions are modified to phosphoserine: Ser375, Ser424, and Ser428. Residues 432–462 (EGVKRRVKSPGSGHVKQKAVKRPASMYSTGK) form a disordered region. NHL repeat units lie at residues 473 to 516 (IFRV…FSND), 520 to 563 (KSRF…FSSD), 564 to 605 (GKFK…FQPN), 609 to 652 (VTRF…FNQE), 656 to 699 (MLKF…FDGS), and 700 to 743 (GSFL…YRYL).

Belongs to the TRIM/RBCC family. In terms of assembly, forms homooligomers. Interacts with TRIM3; this interaction reduces TRIM2 activity. Interacts with myosin V; myosin V may not be a substrate for ubiquitination. Interacts with NEFL. Interacts with phosphorylated BCL2L11. Interacts with SIRPA. In terms of processing, RING-type zinc finger-dependent and UBE2D1-dependent autoubiquitination.

The protein resides in the cytoplasm. The catalysed reaction is S-ubiquitinyl-[E2 ubiquitin-conjugating enzyme]-L-cysteine + [acceptor protein]-L-lysine = [E2 ubiquitin-conjugating enzyme]-L-cysteine + N(6)-ubiquitinyl-[acceptor protein]-L-lysine.. Its pathway is protein modification; protein ubiquitination. Its function is as follows. UBE2D1-dependent E3 ubiquitin-protein ligase that mediates the ubiquitination of NEFL and of phosphorylated BCL2L11. Plays a neuroprotective function. May play a role in neuronal rapid ischemic tolerance. Plays a role in antiviral immunity and limits New World arenavirus infection independently of its ubiquitin ligase activity. The chain is Tripartite motif-containing protein 2 (TRIM2) from Callithrix jacchus (White-tufted-ear marmoset).